We begin with the raw amino-acid sequence, 871 residues long: MSFSEMNRRTLAFRGGGLVTASGGGSTNNNAGGEASAWPPQPQPRQPPPPAPPALQPPNGRGADEEVELEGLEPQDLEASAGPAAGAAEEAKELLLPQDAGGPTSLGGGAGGPLLAERNRRTLAFRGGGGGGLGNNGSSRGRPETSVWPLRHFNGRGPATVDLELDALEGKELMQDGASLSDSTEDEEEGASLGDGSGAEGGSCSSSRRSGGDGGDEVEGSGVGAGEGETVQHFPLARPKSLMQKLQCSFQTSWLKDFPWLRYSKDTGLMSCGWCQKTPADGGSVDLPPVGHDELSRGTRNYKKTLLLRHHVSTEHKLHEANAQESEIPSEEGYCDFNSRPNENSYCYQLLRQLNEQRKKGILCDVSIVVSGKIFKAHKNILVAGSRFFKTLYCFSNKESPNQNNTTHLDIAAVQGFSVILDFLYSGNLVLTSQNAIEVMTVASYLQMSEVVQTCRNFIKDALNISIKSEAPESVVVDYNNRKPVNRDGLSSSRDQKIASFWATRNLTNLASNVKIENDGCNVDEGQIENYQMNDSSWVQDGSPEMAENESEGQTKVFIWNNMGSQGIQETGKTRRKNQTTKRFIYNIPPNNETNLEDCSVMQPPVAYPEENTLLIKEEPDLDGALLSGPDGDRNVNANLLAEAGTSQDGGDAGTSHDFKYGLMPGPSNDFKYGLIPGTSNDFKYGLIPGASNDFKYGLLPESWPKQETWENGESSLIMNKLKCPHCSYVAKYRRTLKRHLLIHTGVRSFSCDICGKLFTRREHVKRHSLVHKKDKKYKCMVCKKIFMLAASVGIRHGSRRYGVCVDCADKSQPGGQEGVDQGQDTEFPRDEEYEENEVGEADEELVDDGEDQNDPSRWDESGEVCMSLDD.

Disordered regions lie at residues Met-1–Arg-156 and Gly-177–Gly-228. Residues Arg-14–Ser-26 show a composition bias toward gly residues. The segment covering Thr-27 to Ala-37 has biased composition (low complexity). Over residues Pro-39–Gln-56 the composition is skewed to pro residues. A compositionally biased stretch (acidic residues) spans Glu-65 to Asp-76. Low complexity predominate over residues Leu-77–Pro-103. Omega-N-methylarginine is present on Arg-126. Positions Arg-126–Asn-135 are enriched in gly residues. The residue at position 210 (Ser-210) is a Phosphoserine. Lys-245 is covalently cross-linked (Glycyl lysine isopeptide (Lys-Gly) (interchain with G-Cter in SUMO2)). One can recognise a BTB domain in the interval Cys-364–Ser-433. Residues Lys-468, Lys-483, and Lys-497 each participate in a glycyl lysine isopeptide (Lys-Gly) (interchain with G-Cter in SUMO2) cross-link. Phosphoserine is present on Ser-565. Residues Lys-573, Lys-672, Lys-684, Lys-696, and Lys-706 each participate in a glycyl lysine isopeptide (Lys-Gly) (interchain with G-Cter in SUMO2) cross-link. 2 C2H2-type zinc fingers span residues Leu-722–His-744 and Phe-750–His-772. The segment at Ser-812–Asp-871 is disordered. Positions Arg-830 to Asn-854 are enriched in acidic residues.

The protein resides in the nucleus. May be involved in transcriptional regulation. The polypeptide is Zinc finger and BTB domain-containing protein 10 (ZBTB10) (Homo sapiens (Human)).